Consider the following 1276-residue polypeptide: Receptor-type guanylate cyclase gcy-28 (1276 aa).

The N-terminal stretch at 1 to 18 is a signal peptide; the sequence is MLRWLTLLSCILLTALHG. Topologically, residues 19–515 are extracellular; it reads NIVEDVGAAQ…KSKCPGYPLH (497 aa). N-linked (GlcNAc...) asparagine glycosylation is found at Asn-87, Asn-196, Asn-338, Asn-384, Asn-387, Asn-414, Asn-428, and Asn-444. Residues 516–536 form a helical membrane-spanning segment; that stretch reads VYLLMGSFLLILVLVGLFIFF. Residues 537–1276 are Cytoplasmic-facing; that stretch reads WRRYKLEQEL…EIPDFGEEFA (740 aa). Disordered stretches follow at residues 562-601 and 635-709; these read ESQKKNEKKKAKKRKNHNDYLPESDPLLRSTSRSSVNSDK and IFTR…KKSL. Positions 567 to 577 are enriched in basic residues; sequence NEKKKAKKRKN. Composition is skewed to polar residues over residues 590 to 599 and 642 to 660; these read RSTSRSSVNS and TPPSESQKNGGLTPNSLQK. Positions 717–1013 constitute a Protein kinase domain; it reads SFGMVSFKSG…SSVRKAVRSL (297 aa). Residues 723 to 731 and Lys-756 each bind ATP; that span reads FKSGSGGSV. Positions 1017–1063 form a coiled coil; sequence NETSNLVDNLLKRMEQYANNLEGLVEERTQEYLAEKKKVEELLHQLL. In terms of domain architecture, Guanylate cyclase spans 1086–1215; it reads TIYFSDIVGF…DTVNTSSRME (130 aa). Mg(2+) is bound by residues Asp-1091, Ile-1092, and Asp-1135.

This sequence belongs to the adenylyl cyclase class-4/guanylyl cyclase family. Expressed in head neurons, ventral cord and tail neurons, body wall muscle, hypodermis, somatic gonad and intestine. Isoform d is expressed specifically in AIA interneurons.

It localises to the cell membrane. Its subcellular location is the cell projection. The protein localises to the dendrite. The protein resides in the axon. It is found in the perikaryon. It carries out the reaction GTP = 3',5'-cyclic GMP + diphosphate. Functionally, guanylate cyclase involved in the production of the second messenger cGMP. Regulates olfactory perception in AWC sensory neurons although may not be involved in the primary sensory transduction steps. Isoforms c: Regulates sensory integration of conflicting sensory cues in AIA interneurons. Its function is as follows. Regulates sensory integration of conflicting sensory cues in AIA interneurons. The chain is Receptor-type guanylate cyclase gcy-28 from Caenorhabditis elegans.